The chain runs to 192 residues: MTEYALILISTVLVNNFVLVKFLGLCPFMGVSRKVETATGMGLATTFVLTLSSVCSYLVNEYLLAPLGLEYLRTIAFILVIAAVVQFTEMVVHKTSPLLYNVLGIFLPLITTNCAVLGVALLNVQEAHGFIESALYGLGAAVGFSLVLVLFASIRERVAVADVPLPFKGNAIALITAGLMSLGFMGFIGLVK.

The next 6 helical transmembrane spans lie at 5–25 (ALIL…FLGL), 39–59 (TGMG…SYLV), 65–85 (APLG…AAVV), 102–122 (VLGI…VALL), 134–154 (ALYG…FASI), and 171–191 (AIAL…IGLV).

It belongs to the NqrDE/RnfAE family. As to quaternary structure, the complex is composed of six subunits: RnfA, RnfB, RnfC, RnfD, RnfE and RnfG.

It localises to the cell inner membrane. Part of a membrane-bound complex that couples electron transfer with translocation of ions across the membrane. This is Ion-translocating oxidoreductase complex subunit A from Thioalkalivibrio sulfidiphilus (strain HL-EbGR7).